Consider the following 428-residue polypeptide: Glutamate-1-semialdehyde 2,1-aminomutase (428 aa).

K267 is modified (N6-(pyridoxal phosphate)lysine).

Belongs to the class-III pyridoxal-phosphate-dependent aminotransferase family. HemL subfamily. As to quaternary structure, homodimer. Pyridoxal 5'-phosphate is required as a cofactor.

Its subcellular location is the cytoplasm. It catalyses the reaction (S)-4-amino-5-oxopentanoate = 5-aminolevulinate. Its pathway is porphyrin-containing compound metabolism; protoporphyrin-IX biosynthesis; 5-aminolevulinate from L-glutamyl-tRNA(Glu): step 2/2. This chain is Glutamate-1-semialdehyde 2,1-aminomutase, found in Trichlorobacter lovleyi (strain ATCC BAA-1151 / DSM 17278 / SZ) (Geobacter lovleyi).